The following is a 1050-amino-acid chain: Collagen alpha-2(I) chain (1050 aa).

Residues 1 to 1050 (SGGFDFSFLP…FGYEGDFYRA (1050 aa)) are disordered. Pro10 and Pro13 each carry 4-hydroxyproline. Positions 20–32 (RYYGVGLGPGPMG) are enriched in gly residues. Composition is skewed to low complexity over residues 33–46 (LMGPRGPPGASGAP) and 56–77 (EPGEPGQTGPAGARGPPGAPGK). 4-hydroxyproline is present on residues Pro40 and Pro46. The span at 78–92 (AGEDGHPGKPGRPGE) shows a compositional bias: basic and acidic residues. Lys114 bears the 5-hydroxylysine; alternate mark. Lys114 carries an O-linked (Gal...) hydroxylysine; alternate glycan. 5 stretches are compositionally biased toward low complexity: residues 161 to 190 (VGAPGPAGARGSDGSVGPVGPAGPIGSAGP), 236 to 257 (PGANGLTGAKGAAGLPGVAGAP), 298 to 311 (EPGSAGPQGPPGSS), 320 to 338 (NGESGSTGPTGPPGLRGNP), and 355 to 371 (PAGARGASGPAGVRGPS). 4-hydroxyproline is present on residues Pro377 and Pro380. 2 stretches are compositionally biased toward low complexity: residues 406 to 425 (LPGIDGRPGPIGPAGARGEA) and 452 to 467 (AGNRGAPGPDGNNGAQ). The span at 474 to 483 (GVQGGKGEQG) shows a compositional bias: gly residues. Composition is skewed to low complexity over residues 530–547 (PGESGAVGPSGAIGSRGP), 598–642 (VGTT…PRGS), and 649–669 (VGPAGPNGFAGPAGAAGQPGA). Positions 670–679 (KGERGTKGPK) are enriched in basic and acidic residues. Positions 687-697 (PTGPVGSAGPA) are enriched in low complexity. Positions 707–716 (GSRGDGGPPG) are enriched in gly residues. The span at 718 to 727 (TGFPGAAGRT) shows a compositional bias: low complexity. The span at 764-773 (GETGAGGPPG) shows a compositional bias: gly residues. 4 stretches are compositionally biased toward low complexity: residues 781–808 (SGEPGTAGPPGTAGPQGLLGAPGILGLP), 816–841 (LPGVAGAVGEPGPLGIAGPPGARGPS), 881–903 (YAGNAGPVGAAGAPGPHGTVGPA), and 911–926 (EPGPVGSVGPVGALGP). Residues 936–947 (RGDKGEPGDKGP) are compositionally biased toward basic and acidic residues. A compositionally biased stretch (pro residues) spans 1020–1032 (SGPPGPPGPPGPP).

This sequence belongs to the fibrillar collagen family. Trimers of one alpha 2(I) and two alpha 1(I) chains. Interacts (via C-terminus) with TMEM131 (via PapD-L domain); the interaction is direct and is involved in assembly and TRAPPIII ER-to-Golgi transport complex-dependent secretion of collagen. Prolines at the third position of the tripeptide repeating unit (G-X-Y) are hydroxylated in some or all of the chains. As to expression, expressed in bones.

The protein localises to the secreted. Its subcellular location is the extracellular space. It is found in the extracellular matrix. Type I collagen is a member of group I collagen (fibrillar forming collagen). The protein is Collagen alpha-2(I) chain of Megatherium americanum (Giant ground sloth).